The sequence spans 289 residues: LysM and putative peptidoglycan-binding domain-containing protein 4 (289 aa).

The interval 1-23 (MRLREGPTHSFQPPSSVHSSLGS) is disordered. The Extracellular segment spans residues 1 to 208 (MRLREGPTHS…PASGADWGIR (208 aa)). The segment covering 9-23 (HSFQPPSSVHSSLGS) has biased composition (polar residues). N-linked (GlcNAc...) asparagine glycans are attached at residues Asn30 and Asn59. The LysM domain maps to 71–115 (LERAITEDDNLNKLALQYGCKVSDIKRVNNLITDQDIYALKTIKI). Asn134 and Asn178 each carry an N-linked (GlcNAc...) asparagine glycan. Residues 209–229 (WWNAVFIMLLVGIVLPVFYIV) form a helical membrane-spanning segment. The Cytoplasmic portion of the chain corresponds to 230-289 (YFKTQGDSEGTFSIEGRTNVSTSLSPHTNTGHSMEQMTQRTSGFSPGLLQDTHKLLNPGG). The segment at 252-272 (SLSPHTNTGHSMEQMTQRTSG) is disordered.

Its subcellular location is the membrane. The chain is LysM and putative peptidoglycan-binding domain-containing protein 4 (lysmd4) from Xenopus laevis (African clawed frog).